Here is a 1240-residue protein sequence, read N- to C-terminus: MESEFSQSLTPPVSPSALNHYGESAPSRPPCFTCAYEAGREDTGRLSSNGYISRGALKRLLLKLDPAPADFGGDTVDIFDFPWVTETALVESTKLLFGLFRQKVLKLETLVQSSSHDFGQASSLHYEAEELRQQCVLFLSYIKVFIYRFLEPSQSLDEGPVHPFKDAEAQLPSVLVEELFSITLLIGRIGNLPANVQSAFTIQHQGKLFPPSWQLLHLHLDIHWSVLEILHLLEQRMMGQVVYAHQFVNLTGETLTNISLFEDQVNNLFCDLIGLAMNKYNKVRPTETLNTHHYHCLCTKELWILLIHLLEHRSKSIHTQSFWSYINALLQTVLKGTTSGDRDPGFPVHCKDPEGFTWWLLTHLAQIGMHNRNGTAQQEKQLEDNWSFVIGLLKSICDPKKAAQEEQIRVVVHCCLSLSLMWGPNVSAVTTFWEYYSKNLNSSFTVPWLGVSGLGSICRTPLCLLQQAKSCCSPAPVGSSSHTQLYRTANSFHIFLRILALHLSQEHAGGAPWRQIKGRLYSKFHQRRMMELSDMGLLHFLLLFLVLAQCAELEDVASRACDLLAMLPTNSTPLALRALQWRGQLALVLLYLEKGLDVGALAEQLAVYFSQAAREFYLKTTEPSRKLALWAPLSSYLEGVSEVFETSPNLTLSEERLLNEGFGLLLPACRQSELSSALGFLQTVLAQLRRVHQRCGQPSHSVDSPSWAPLPSVAKERHQAVAAALWSHFFPFLCSMRLSQTPPPQLADAAAGFTLLALDMPGSAPQNLQPHPIQSIMQSFGWDEMLHPLLVTHYLNHLLQNGELVSWVSSGQGSGSAQALCVRAWIRCVLQQYLHKSPDAPDARAGRNLDEQLAELTRQVFRLPEVEFVLQRAGLQSAAVKDPKAAMAVFLKAVGRSYCELQLLSERSSAVSRALEYVGDILKYIKPYLQNKSREGLQLAYWTIGCLVKHWSHLLATSKAQQLLFRIVDVLLLPHALLQQDTAAHTQMLSALKDSLPMFLQGLSVAVSVSHSQGAYLKQQQHSVISQYLSRFLPATPSTGAVVNHPVLLAACESTPSPQGERLRKSILHVLRENFLQFKGLAPPPRLAAVLCFLLELLKRNSDRDPALLTIPLPSVLRCLMLVNEPQVKRLSSEVTQLIVERCTAAVGEQPCEHTTAILRAFVDENEGVYDQQVYNVLEVVAVLHPFTVAALIPFLTLSLRKTECKRGLGKNTSLRNGYRRLLALLGDSGQAEMISLEED.

Residues 1-11 (MESEFSQSLTP) are compositionally biased toward polar residues. A disordered region spans residues 1–26 (MESEFSQSLTPPVSPSALNHYGESAP).

It belongs to the MMS22 family. MMS22L subfamily. In terms of assembly, component of the MMS22L-TONSL complex.

It is found in the nucleus. It localises to the chromosome. Its function is as follows. Component of the MMS22L-TONSL complex, a complex that promotes homologous recombination-mediated repair of double-strand breaks (DSBs) at stalled or collapsed replication forks. The MMS22L-TONSL complex is required to maintain genome integrity during DNA replication. It mediates the assembly of RAD51 filaments on single-stranded DNA (ssDNA): the MMS22L-TONSL complex is recruited to DSBs following histone replacement by histone chaperones and eviction of the replication protein A complex (RPA/RP-A) from DSBs. Following recruitment to DSBs, the TONSL-MMS22L complex promotes recruitment of RAD51 filaments and subsequent homologous recombination. Within the complex, MMS22L acts by binding ssDNA. This chain is Protein MMS22-like (mms22l), found in Danio rerio (Zebrafish).